Consider the following 215-residue polypeptide: MKFFLDTANVEKIKEFNALGLVDGVTTNPSLIKKEGRDFYEVIKEICAIVDGPVSAEVIALDAEGMVKEARELVKLAENVVVKIPMTKEGMKAVNILSKEGIKTNVTLIFSANQALLAAKAGASYVSPFVGRLDDVGQDGMFLISEVMQVFSAYGIETEVIVASVRHPIHVIESAKMGADIATIPFDVLDKLFNHPLTDNGIEKFLADWEAHMNR.

Lys-83 acts as the Schiff-base intermediate with substrate in catalysis.

This sequence belongs to the transaldolase family. Type 3B subfamily.

It localises to the cytoplasm. It carries out the reaction D-sedoheptulose 7-phosphate + D-glyceraldehyde 3-phosphate = D-erythrose 4-phosphate + beta-D-fructose 6-phosphate. It functions in the pathway carbohydrate degradation; pentose phosphate pathway; D-glyceraldehyde 3-phosphate and beta-D-fructose 6-phosphate from D-ribose 5-phosphate and D-xylulose 5-phosphate (non-oxidative stage): step 2/3. Functionally, transaldolase is important for the balance of metabolites in the pentose-phosphate pathway. This Methanococcus maripaludis (strain C7 / ATCC BAA-1331) protein is Probable transaldolase.